The chain runs to 20 residues: Cytochrome c oxidase subunit 6A2, mitochondrial (20 aa).

The disordered stretch occupies residues 1–20 (ASGAKGDHGGAGASTXXLLT).

This sequence belongs to the cytochrome c oxidase subunit 6A family. Component of the cytochrome c oxidase (complex IV, CIV), a multisubunit enzyme composed of 14 subunits. The complex is composed of a catalytic core of 3 subunits MT-CO1, MT-CO2 and MT-CO3, encoded in the mitochondrial DNA, and 11 supernumerary subunits COX4I, COX5A, COX5B, COX6A, COX6B, COX6C, COX7A, COX7B, COX7C, COX8 and NDUFA4, which are encoded in the nuclear genome. The complex exists as a monomer or a dimer and forms supercomplexes (SCs) in the inner mitochondrial membrane with NADH-ubiquinone oxidoreductase (complex I, CI) and ubiquinol-cytochrome c oxidoreductase (cytochrome b-c1 complex, complex III, CIII), resulting in different assemblies (supercomplex SCI(1)III(2)IV(1) and megacomplex MCI(2)III(2)IV(2)). Heart specific isoform.

It is found in the mitochondrion inner membrane. It participates in energy metabolism; oxidative phosphorylation. Its function is as follows. Component of the cytochrome c oxidase, the last enzyme in the mitochondrial electron transport chain which drives oxidative phosphorylation. The respiratory chain contains 3 multisubunit complexes succinate dehydrogenase (complex II, CII), ubiquinol-cytochrome c oxidoreductase (cytochrome b-c1 complex, complex III, CIII) and cytochrome c oxidase (complex IV, CIV), that cooperate to transfer electrons derived from NADH and succinate to molecular oxygen, creating an electrochemical gradient over the inner membrane that drives transmembrane transport and the ATP synthase. Cytochrome c oxidase is the component of the respiratory chain that catalyzes the reduction of oxygen to water. Electrons originating from reduced cytochrome c in the intermembrane space (IMS) are transferred via the dinuclear copper A center (CU(A)) of subunit 2 and heme A of subunit 1 to the active site in subunit 1, a binuclear center (BNC) formed by heme A3 and copper B (CU(B)). The BNC reduces molecular oxygen to 2 water molecules unsing 4 electrons from cytochrome c in the IMS and 4 protons from the mitochondrial matrix. Plays a role in the assembly and stabilization of complex IV. The protein is Cytochrome c oxidase subunit 6A2, mitochondrial (COX6A2) of Canis lupus familiaris (Dog).